We begin with the raw amino-acid sequence, 20 residues long: AGLDLGAASXFGALAFEGVA.

In terms of processing, N-glycosylated and O-glycosylated.

It is found in the secreted. The protein localises to the extracellular space. Antifreeze proteins bind to the surface of ice crystals and inhibit the growth of these crystals, this inhibition causes thermal hysteresis. Causes the shape of ice crystals to change from hexagonal to a bipyramidal shape with rugged facets. Inhibits recrystallization of ice crystals. The protein is Antifreeze protein of Antarctomyces psychrotrophicus.